The primary structure comprises 218 residues: Adenylate kinase (218 aa).

An ATP-binding site is contributed by 10-15 (GAGKGT). An NMP region spans residues 30–59 (STGDMLRAAVKAGSPLGLKVKDIMTSGGLV). Residues Thr-31, Arg-36, 57–59 (GLV), 85–88 (GFPR), and Gln-92 each bind AMP. The LID stretch occupies residues 122-159 (GRRVHEASGRVYHVKHNAPKTEGVDDETGEPLVQRDDD). ATP is bound by residues Arg-123 and 132–133 (VY). Arg-156 and Arg-167 together coordinate AMP. An ATP-binding site is contributed by Gly-203.

Belongs to the adenylate kinase family. As to quaternary structure, monomer.

Its subcellular location is the cytoplasm. The catalysed reaction is AMP + ATP = 2 ADP. The protein operates within purine metabolism; AMP biosynthesis via salvage pathway; AMP from ADP: step 1/1. In terms of biological role, catalyzes the reversible transfer of the terminal phosphate group between ATP and AMP. Plays an important role in cellular energy homeostasis and in adenine nucleotide metabolism. The protein is Adenylate kinase of Saccharophagus degradans (strain 2-40 / ATCC 43961 / DSM 17024).